The chain runs to 219 residues: Probable transcription factor At1g55950 (219 aa).

The interval 9-77 is disordered; the sequence is ASHSLKSLMA…DEKMETEEEG (69 aa). Basic residues predominate over residues 17–30; it reads MAKKNKRSQQKNKC. Residues 31–48 are compositionally biased toward basic and acidic residues; it reads LKPEKDPSTVKRLLEDPP. The span at 65–77 shows a compositional bias: acidic residues; that stretch reads YGDDEKMETEEEG.

This sequence belongs to the GeBP family.

This is Probable transcription factor At1g55950 from Arabidopsis thaliana (Mouse-ear cress).